The following is an 81-amino-acid chain: Protein PYP1 (81 aa).

The N-terminal 25 residues, 1 to 25 (MAFVSGFTGMPVTARVSKAVCRTRM), are a transit peptide targeting the chloroplast. The segment at 27–57 (LEGGKSSGGGEATRDPEPTAVDPNDPKGKQQ) is disordered.

It localises to the plastid. It is found in the chloroplast. This Pyropia yezoensis (Susabi-nori) protein is Protein PYP1.